The primary structure comprises 313 residues: Aspartate carbamoyltransferase catalytic subunit (313 aa).

Arg-59 and Thr-60 together coordinate carbamoyl phosphate. Lys-87 is a binding site for L-aspartate. The carbamoyl phosphate site is built by Arg-109, His-137, and Gln-140. L-aspartate-binding residues include Arg-170 and Arg-224. Carbamoyl phosphate contacts are provided by Gly-265 and Pro-266.

This sequence belongs to the aspartate/ornithine carbamoyltransferase superfamily. ATCase family. Heterododecamer (2C3:3R2) of six catalytic PyrB chains organized as two trimers (C3), and six regulatory PyrI chains organized as three dimers (R2).

The enzyme catalyses carbamoyl phosphate + L-aspartate = N-carbamoyl-L-aspartate + phosphate + H(+). It participates in pyrimidine metabolism; UMP biosynthesis via de novo pathway; (S)-dihydroorotate from bicarbonate: step 2/3. In terms of biological role, catalyzes the condensation of carbamoyl phosphate and aspartate to form carbamoyl aspartate and inorganic phosphate, the committed step in the de novo pyrimidine nucleotide biosynthesis pathway. This Agrobacterium fabrum (strain C58 / ATCC 33970) (Agrobacterium tumefaciens (strain C58)) protein is Aspartate carbamoyltransferase catalytic subunit.